We begin with the raw amino-acid sequence, 784 residues long: Kinesin-like protein 6 (784 aa).

In terms of domain architecture, Kinesin motor spans 6–389 (SISVAVRVRP…LKYGNRAKNI (384 aa)). 134-141 (GATGCGKT) is an ATP binding site. 2 coiled-coil regions span residues 405–440 (SEYV…EVRK) and 463–483 (RDLQ…EDEI). A disordered region spans residues 677–715 (SEVPTTSSVPPVEIKNKDSKPKVEKSLDKHNMNNDRSFL). A compositionally biased stretch (basic and acidic residues) spans 690 to 709 (IKNKDSKPKVEKSLDKHNMN).

The protein belongs to the TRAFAC class myosin-kinesin ATPase superfamily. Kinesin family. Kinesin II subfamily. Heterodimer with klp5.

Its subcellular location is the cytoplasm. The protein resides in the cytoskeleton. It localises to the chromosome. It is found in the centromere. The protein localises to the kinetochore. Its subcellular location is the spindle. In terms of biological role, has a role in establishing metaphase during mitosis. Required for chromosome segregation where it generates tension during kinetochore capturing. The protein is Kinesin-like protein 6 (klp6) of Schizosaccharomyces pombe (strain 972 / ATCC 24843) (Fission yeast).